Consider the following 295-residue polypeptide: Adrenocorticotropic hormone receptor (295 aa).

The Extracellular portion of the chain corresponds to 1-23 (MRHILNLYENINSTARNNSDCPA). N-linked (GlcNAc...) asparagine glycans are attached at residues N12 and N17. Disulfide bonds link C21–C253 and C245–C251. A helical transmembrane segment spans residues 24–49 (VILPEEIFFTVSIVGVLENLMVLLAV). At 50–58 (AKNKSLQSP) the chain is on the cytoplasmic side. A helical transmembrane segment spans residues 59 to 79 (MYFFICSLAISDMLGSLYKIL). Topologically, residues 80-104 (ENVLIMFRNMGYLEPRGSFESTADD) are extracellular. Residues 105–126 (VVDSLFILSLLGSICSLSVIAA) traverse the membrane as a helical segment. Residues 127 to 147 (DRYITIFHALQYHSIVTMHRA) lie on the Cytoplasmic side of the membrane. A helical membrane pass occupies residues 148 to 168 (LVVLTVLWAGCTGSGITIVTF). The Extracellular portion of the chain corresponds to 169-180 (SHHVPTVIAFTA). A helical transmembrane segment spans residues 181–199 (LFPLMLAFILCLYVHMFLL). Over 200–217 (ARSHARRTSSLPKANMRG) the chain is Cytoplasmic. The chain crosses the membrane as a helical span at residues 218 to 244 (AITLTVLLGVFIFCWAPFVLHVLLMTF). The Extracellular segment spans residues 245–256 (CPADPYCACYMS). A helical membrane pass occupies residues 257–278 (LFQVNGVLIMCNAVIDPFIYAF). At 279 to 295 (RSPELRVAFKKMVICNW) the chain is on the cytoplasmic side. C293 carries the S-palmitoyl cysteine lipid modification.

The protein belongs to the G-protein coupled receptor 1 family. As to quaternary structure, homodimer. Interacts with corticotropin (ACTH). Interacts with MRAP; this interaction targets MC2R to the plasma membrane. Interacts with MRAP2; competing with MRAP for binding to MC2R and impairing the binding of corticotropin (ACTH). Post-translationally, ubiquitinated by MGRN1 that may be involved in post-endocytic trafficking and/or degradation of internalized receptor.

The protein localises to the cell membrane. Hormone receptor primarily expressed in adrenal cortex that plays a key role in regulating adrenocortical function. Upon corticotropin (ACTH) binding, facilitates the release of adrenal glucocorticoids, including cortisol and corticosterone. In addition, MC2R is required for fetal and neonatal adrenal gland development. Mechanistically, activates adenylate cyclase (cAMP), the MAPK cascade as well as the cAMP-dependent protein kinase A pathway leading to steroidogenic factor 1/NR5A1-mediated transcriptional activation. In Ovis aries (Sheep), this protein is Adrenocorticotropic hormone receptor (MC2R).